A 635-amino-acid chain; its full sequence is Dihydrolipoyllysine-residue acetyltransferase component of pyruvate dehydrogenase complex, mitochondrial (635 aa).

In terms of domain architecture, Lipoyl-binding 1 spans 83–160 (GKEITMPALS…EINKPIAIIV (78 aa)). K124 is subject to N6-lipoyllysine. The disordered stretch occupies residues 171–204 (KNYKPSSQASSTPVQEEAPKPKQEAPKKSTKTYP). A compositionally biased stretch (polar residues) spans 174–184 (KPSSQASSTPV). A compositionally biased stretch (basic and acidic residues) spans 187–197 (EAPKPKQEAPK). The region spanning 206-283 (HKVVGMPALS…QINQPVCIIV (78 aa)) is the Lipoyl-binding 2 domain. K247 is modified (N6-lipoyllysine). Positions 295–338 (YSVEEQSSSSSSSSQESTPSSSSSSSQESTPSQSSSQQTTRKSG) are disordered. Residues 298-334 (EEQSSSSSSSSQESTPSSSSSSSQESTPSQSSSQQTT) show a composition bias toward low complexity. A Peripheral subunit-binding (PSBD) domain is found at 342-379 (FATPAARFEASSKGYDLSAINGTGPNNRILKADVLEFV). Residues 382-413 (KQEVAQQQQQQTTTTTKKPTTPTSSGEFTDIP) form a disordered region. The span at 387–404 (QQQQQQTTTTTKKPTTPT) shows a compositional bias: low complexity. The segment at 403–635 (PTSSGEFTDI…YVENPIKLIL (233 aa)) is catalytic.

Belongs to the 2-oxoacid dehydrogenase family. 20 to 30 alpha(2)-beta(2) tetramers of E1 + 6 homodimers of E3 + 60 copies of E2. (R)-lipoate is required as a cofactor.

The protein localises to the mitochondrion matrix. The enzyme catalyses N(6)-[(R)-dihydrolipoyl]-L-lysyl-[protein] + acetyl-CoA = N(6)-[(R)-S(8)-acetyldihydrolipoyl]-L-lysyl-[protein] + CoA. The pyruvate dehydrogenase complex catalyzes the overall conversion of pyruvate to acetyl-CoA and CO(2). It contains multiple copies of three enzymatic components: pyruvate dehydrogenase (E1), dihydrolipoamide acetyltransferase (E2) and lipoamide dehydrogenase (E3). This Dictyostelium discoideum (Social amoeba) protein is Dihydrolipoyllysine-residue acetyltransferase component of pyruvate dehydrogenase complex, mitochondrial (pdhC).